The primary structure comprises 90 residues: Acylphosphatase (90 aa).

In terms of domain architecture, Acylphosphatase-like spans 3 to 88 (TWHMTAHGRV…GKFEDFDLRP (86 aa)). Residues arginine 18 and asparagine 36 contribute to the active site.

It belongs to the acylphosphatase family.

The catalysed reaction is an acyl phosphate + H2O = a carboxylate + phosphate + H(+). The chain is Acylphosphatase (acyP) from Cupriavidus pinatubonensis (strain JMP 134 / LMG 1197) (Cupriavidus necator (strain JMP 134)).